The sequence spans 90 residues: Acylphosphatase (90 aa).

The 88-residue stretch at Asn-3 to Tyr-90 folds into the Acylphosphatase-like domain. Catalysis depends on residues Arg-18 and Asn-36.

Belongs to the acylphosphatase family.

It carries out the reaction an acyl phosphate + H2O = a carboxylate + phosphate + H(+). In Ligilactobacillus salivarius (strain UCC118) (Lactobacillus salivarius), this protein is Acylphosphatase (acyP).